Reading from the N-terminus, the 413-residue chain is 2,3-diketo-5-methylthiopentyl-1-phosphate enolase (413 aa).

Catalysis depends on lysine 98, which acts as the Proton acceptor. Residues lysine 147, 173–176 (KDDE), histidine 264, glycine 337, and 359–360 (GG) contribute to the substrate site. Mg(2+)-binding residues include lysine 173, aspartate 175, and glutamate 176. Lysine 173 carries the post-translational modification N6-carboxylysine.

This sequence belongs to the RuBisCO large chain family. Type IV subfamily. As to quaternary structure, homodimer. Requires Mg(2+) as cofactor.

It catalyses the reaction 5-methylsulfanyl-2,3-dioxopentyl phosphate = 2-hydroxy-5-methylsulfanyl-3-oxopent-1-enyl phosphate. Its pathway is amino-acid biosynthesis; L-methionine biosynthesis via salvage pathway; L-methionine from S-methyl-5-thio-alpha-D-ribose 1-phosphate: step 3/6. Functionally, catalyzes the enolization of 2,3-diketo-5-methylthiopentyl-1-phosphate (DK-MTP-1-P) into 2-hydroxy-3-keto-5-methylthiopentenyl-1-phosphate (HK-MTPenyl-1-P). This is 2,3-diketo-5-methylthiopentyl-1-phosphate enolase from Geobacillus thermodenitrificans (strain NG80-2).